Consider the following 969-residue polypeptide: Dual serine/threonine and tyrosine protein kinase (969 aa).

A coiled-coil region spans residues 7 to 37 (QEFRRYLRNRNQLQHVLEETQQALELINLEN). One can recognise a Protein kinase domain in the interval 632 to 894 (PHCAEEIGRG…PLLGAIVPVL (263 aa)). ATP-binding positions include 638–646 (IGRGQYGIV) and K662. The active-site Proton acceptor is D760. Positions 904 to 945 (SKSLQEVSSDKLQESSTDSRNPALALAEPYNQRGTVVSPPPT) are disordered.

The protein belongs to the protein kinase superfamily. Ser/Thr protein kinase family.

The protein resides in the cytoplasm. It catalyses the reaction L-seryl-[protein] + ATP = O-phospho-L-seryl-[protein] + ADP + H(+). It carries out the reaction L-threonyl-[protein] + ATP = O-phospho-L-threonyl-[protein] + ADP + H(+). The enzyme catalyses L-tyrosyl-[protein] + ATP = O-phospho-L-tyrosyl-[protein] + ADP + H(+). This chain is Dual serine/threonine and tyrosine protein kinase, found in Apis mellifera (Honeybee).